A 435-amino-acid chain; its full sequence is Indole diterpene prenyltransferase atmD (435 aa).

Residues 81-82 (AY) and Glu-90 each bind L-tryptophan. 7 residues coordinate substrate: Arg-103, Lys-190, Arg-261, Lys-263, Tyr-265, Tyr-346, and Tyr-413.

Belongs to the tryptophan dimethylallyltransferase family.

Functionally, indole diterpene prenyltransferase; part of the ATM2 gene cluster that mediates the biosynthesis of aflatrem, a tremorgenic mycotoxin with acute neurotoxic effects. Synthesis of geranylgeranyl diphosphate (GGPP) by AtmG (a GGPP synthase) precedes condensation of GGPP with indole 3-glycerol phosphate, followed by epoxidation and cyclization by AtmM (a FAD-dependent monooxygenase) and AtmC (a prenyltransferase) to produce paspaline. AtmB is also essential for paspaline production, but its exact role has not been identified yet. AtmP, a cytochrome P450 monooxygenase, subsequently converts paspaline to 13-desoxypaxilline via PC-M6 by removal of the C-30 methyl group and oxidation at C-10. AtmQ, a cytochrome P450 monooxygenase, then catalyzes the oxidation of 13-desoxypaxilline, first at C-7 to produce paspalicine and then at C-13 to form paspalinine. Finally, AtmD prenylates paspalinine to form aflatrem. This Aspergillus flavus protein is Indole diterpene prenyltransferase atmD.